The following is a 393-amino-acid chain: NAD(P)H-quinone oxidoreductase subunit H, chloroplastic (393 aa).

This sequence belongs to the complex I 49 kDa subunit family. As to quaternary structure, NDH is composed of at least 16 different subunits, 5 of which are encoded in the nucleus. Interacts with the chaperonin CNP60B4 subunit.

Its subcellular location is the plastid. It localises to the chloroplast thylakoid membrane. The catalysed reaction is a plastoquinone + NADH + (n+1) H(+)(in) = a plastoquinol + NAD(+) + n H(+)(out). It carries out the reaction a plastoquinone + NADPH + (n+1) H(+)(in) = a plastoquinol + NADP(+) + n H(+)(out). Functionally, NDH shuttles electrons from NAD(P)H:plastoquinone, via FMN and iron-sulfur (Fe-S) centers, to quinones in the photosynthetic chain and possibly in a chloroplast respiratory chain. The immediate electron acceptor for the enzyme in this species is believed to be plastoquinone. Couples the redox reaction to proton translocation, and thus conserves the redox energy in a proton gradient. The sequence is that of NAD(P)H-quinone oxidoreductase subunit H, chloroplastic from Arabidopsis thaliana (Mouse-ear cress).